The chain runs to 115 residues: Biotrophy-associated secreted protein 1 (115 aa).

The N-terminal stretch at 1–22 (MHVFNFAALFTVLATFTATAAA) is a signal peptide. Positions 24-115 (DQGSNTFDQR…GIRRVENYYP (92 aa)) are disordered. 2 stretches are compositionally biased toward basic and acidic residues: residues 46–55 (IREEKQENVG) and 91–115 (QQKERAERKQDRGLNGIRRVENYYP).

It localises to the secreted. Its subcellular location is the host cytoplasm. Its function is as follows. Secreted effector involved in biotrophic colonization of plant cells. Induces an early, basal defense response in susceptible rice, including rapid callose deposition and ROS production in leaves and calli. Also promotes sporulation and mycelia growth suggesting a role across the whole process of interaction, from the biotrophic phase to sporulation. The chain is Biotrophy-associated secreted protein 1 from Pyricularia oryzae (strain 70-15 / ATCC MYA-4617 / FGSC 8958) (Rice blast fungus).